The following is a 408-amino-acid chain: MSLSVTRENFDEWMVPVYVPAPFIPVRGEGSRLWEQQGKEYIDFAGGIAVNALGHAHPALREALNEQANRFWHTGNGYTNEPALRLAKKLIDATFAERVFFCNSGAEANEAALKLARKYAHDRVGNHKSGIVAFKNAFHGRTLFTVSAGGQPTYSQDFAPLPPDIRHAAYNDLNSASALIDDNTCAVIVEPVQGEGGVIPATKAFLQGLRELCDRHQALLIFDEVQTGVGRTGELYAYMHYGVTPDILTTAKALGGGFPIGAMLTTQDYASVMTPGTHGTTYGGNPLATAVAGKVLDIINTPEMQNGVRQRHDAFIERLNTINVRFGMFSEIRGLGLLLGCVLQTEFAGKAKLIAQEAAKAGVMVLIAGGDVVRFAPALNVSDEEIATGLDRFALACERLQTGGASCG.

Lys252 carries the N6-(pyridoxal phosphate)lysine modification.

Belongs to the class-III pyridoxal-phosphate-dependent aminotransferase family. AstC subfamily. It depends on pyridoxal 5'-phosphate as a cofactor.

The catalysed reaction is N(2)-succinyl-L-ornithine + 2-oxoglutarate = N-succinyl-L-glutamate 5-semialdehyde + L-glutamate. The protein operates within amino-acid degradation; L-arginine degradation via AST pathway; L-glutamate and succinate from L-arginine: step 3/5. Functionally, catalyzes the transamination of N(2)-succinylornithine and alpha-ketoglutarate into N(2)-succinylglutamate semialdehyde and glutamate. Can also act as an acetylornithine aminotransferase. This chain is Succinylornithine transaminase, found in Salmonella choleraesuis (strain SC-B67).